A 574-amino-acid polypeptide reads, in one-letter code: Avenacosidase 1 (574 aa).

The N-terminal 55 residues, 1 to 55 (MALLCSALSNSTHPSFRSHIGANSENLWHLSADPAQKSKRRCNLTLSSRAARISS), are a transit peptide targeting the chloroplast. Residues glutamine 88, histidine 192, and 237-238 (NE) contribute to the a beta-D-glucoside site. Residue glutamate 238 is the Proton donor of the active site. A disulfide bond links cysteine 258 and cysteine 264. Residues tyrosine 381, glutamate 454, tryptophan 505, 512–513 (EW), and phenylalanine 521 contribute to the a beta-D-glucoside site. The active-site Nucleophile is glutamate 454.

It belongs to the glycosyl hydrolase 1 family. Homo- and heteromultimer with P60B in a 1:1 stoichiometry. Aggregates to form the fibrillar stromacentre. As to expression, expressed in caryopses, coleoptiles, primary leaves, and etiolated and green seedlings, but not in roots.

Its subcellular location is the plastid. The protein resides in the chloroplast stroma. The catalysed reaction is avenacoside B + H2O = 26-desgluco-avenacoside B + D-glucose. With respect to regulation, inhibited by N-(3-Dimethylaminopropyl)-N'-ethylcarbodiimide hydrochloride (EDC). Functionally, beta-glucosidase acting as a preformed defense system. Hydrolyzes the bisdesmosides avenacosides A and B to 26-desgluco-avenacosides exhibiting fungicidal activity. Can use beta-fucoside &gt; beta-glucoside &gt; beta-galactoside &gt; beta-xyloside as substrates, but not alpha-glycosides, beta-thioglucosides and disaccharides. The chain is Avenacosidase 1 (P60A) from Avena sativa (Oat).